Consider the following 294-residue polypeptide: Putative immediate early glycoprotein (294 aa).

Positions 1–21 (MKKLTMESLLVYTFVMGVCFT) are cleaved as a signal peptide. Residues 262–282 (LFFLAGGAFTMLLLLCCLSMI) traverse the membrane as a helical segment.

Belongs to the herpesviridae immediate early glycoprotein family.

It localises to the host membrane. In Homo sapiens (Human), this protein is Putative immediate early glycoprotein (U18).